The sequence spans 82 residues: Sulfur carrier protein TusA (82 aa).

Cys-19 functions as the Cysteine persulfide intermediate in the catalytic mechanism.

This sequence belongs to the sulfur carrier protein TusA family.

Its subcellular location is the cytoplasm. Sulfur carrier protein which probably makes part of a sulfur-relay system. This Tolumonas auensis (strain DSM 9187 / NBRC 110442 / TA 4) protein is Sulfur carrier protein TusA.